The primary structure comprises 500 residues: Ribose import ATP-binding protein RbsA (500 aa).

ABC transporter domains are found at residues 3 to 239 and 246 to 493; these read IEMK…VGRE and DRTP…TGGV. 35-42 is an ATP binding site; it reads GENGAGKS.

It belongs to the ABC transporter superfamily. Ribose importer (TC 3.A.1.2.1) family. As to quaternary structure, the complex is composed of an ATP-binding protein (RbsA), two transmembrane proteins (RbsC) and a solute-binding protein (RbsB).

It localises to the cell membrane. It carries out the reaction D-ribose(out) + ATP + H2O = D-ribose(in) + ADP + phosphate + H(+). Functionally, part of the ABC transporter complex RbsABC involved in ribose import. Responsible for energy coupling to the transport system. The protein is Ribose import ATP-binding protein RbsA of Lacticaseibacillus paracasei (strain ATCC 334 / BCRC 17002 / CCUG 31169 / CIP 107868 / KCTC 3260 / NRRL B-441) (Lactobacillus paracasei).